The chain runs to 124 residues: Small ribosomal subunit protein uS12 (124 aa).

Aspartate 89 is subject to 3-methylthioaspartic acid. Positions 103–124 (DTAGVQNRNRGRSKYGAKRPKK) are disordered. Positions 111-124 (NRGRSKYGAKRPKK) are enriched in basic residues.

Belongs to the universal ribosomal protein uS12 family. Part of the 30S ribosomal subunit. Contacts proteins S8 and S17. May interact with IF1 in the 30S initiation complex.

Functionally, with S4 and S5 plays an important role in translational accuracy. Interacts with and stabilizes bases of the 16S rRNA that are involved in tRNA selection in the A site and with the mRNA backbone. Located at the interface of the 30S and 50S subunits, it traverses the body of the 30S subunit contacting proteins on the other side and probably holding the rRNA structure together. The combined cluster of proteins S8, S12 and S17 appears to hold together the shoulder and platform of the 30S subunit. The protein is Small ribosomal subunit protein uS12 of Desulforudis audaxviator (strain MP104C).